The chain runs to 889 residues: Alanine--tRNA ligase (889 aa).

4 residues coordinate Zn(2+): H574, H578, C682, and H686.

This sequence belongs to the class-II aminoacyl-tRNA synthetase family. Zn(2+) is required as a cofactor.

The protein resides in the cytoplasm. The enzyme catalyses tRNA(Ala) + L-alanine + ATP = L-alanyl-tRNA(Ala) + AMP + diphosphate. Catalyzes the attachment of alanine to tRNA(Ala) in a two-step reaction: alanine is first activated by ATP to form Ala-AMP and then transferred to the acceptor end of tRNA(Ala). Also edits incorrectly charged Ser-tRNA(Ala) and Gly-tRNA(Ala) via its editing domain. This chain is Alanine--tRNA ligase, found in Orientia tsutsugamushi (strain Ikeda) (Rickettsia tsutsugamushi).